Here is a 428-residue protein sequence, read N- to C-terminus: Probable RNase MJ4 (428 aa).

7 residues coordinate Zn(2+): histidine 57, histidine 59, aspartate 61, histidine 62, histidine 143, aspartate 165, and histidine 397.

The protein belongs to the metallo-beta-lactamase superfamily. RNA-metabolizing metallo-beta-lactamase-like family. It depends on Zn(2+) as a cofactor.

In terms of biological role, probably an RNase. This Methanocaldococcus jannaschii (strain ATCC 43067 / DSM 2661 / JAL-1 / JCM 10045 / NBRC 100440) (Methanococcus jannaschii) protein is Probable RNase MJ4.